A 689-amino-acid polypeptide reads, in one-letter code: Armadillo-like helical domain-containing protein 3 (689 aa).

Residues 520–538 form a helical membrane-spanning segment; it reads IFTLALMIVNLFNMFITYG.

The protein belongs to the ARMH3 family. Interacts with PI4KB. Interacts with GBF1.

Its subcellular location is the golgi apparatus membrane. The protein localises to the cytoplasm. In terms of biological role, involved in GBF1 recruitment, Golgi maintenance and protein secretion. In Homo sapiens (Human), this protein is Armadillo-like helical domain-containing protein 3.